The following is a 171-amino-acid chain: MIRPSAFSYEDLLQCGRGEMFGPGNAQLPMPPMLMFDRITYISDEGGAFGKGEINAEMEIKPDSWFFNCHFPSDPVMPGCLGLDAMWQLLGFYLAWRGGPGHGRALGSGEVKFTGQVTPKNKLVTYHINLKRVIMRKLVMGIADGIMAVDGREIYLAKDLRVGLFVSTDSF.

Residue H70 is part of the active site.

The protein belongs to the thioester dehydratase family. FabA subfamily. In terms of assembly, homodimer.

Its subcellular location is the cytoplasm. It carries out the reaction a (3R)-hydroxyacyl-[ACP] = a (2E)-enoyl-[ACP] + H2O. It catalyses the reaction (3R)-hydroxydecanoyl-[ACP] = (2E)-decenoyl-[ACP] + H2O. The enzyme catalyses (2E)-decenoyl-[ACP] = (3Z)-decenoyl-[ACP]. It functions in the pathway lipid metabolism; fatty acid biosynthesis. Necessary for the introduction of cis unsaturation into fatty acids. Catalyzes the dehydration of (3R)-3-hydroxydecanoyl-ACP to E-(2)-decenoyl-ACP and then its isomerization to Z-(3)-decenoyl-ACP. Can catalyze the dehydratase reaction for beta-hydroxyacyl-ACPs with saturated chain lengths up to 16:0, being most active on intermediate chain length. In Nitrosococcus oceani (strain ATCC 19707 / BCRC 17464 / JCM 30415 / NCIMB 11848 / C-107), this protein is 3-hydroxydecanoyl-[acyl-carrier-protein] dehydratase.